Reading from the N-terminus, the 300-residue chain is GTPase Era (300 aa).

In terms of domain architecture, Era-type G spans 8–176 (RCGYVAIVGR…ESLIASHLPE (169 aa)). The segment at 16–23 (GRPNVGKS) is G1. Position 16 to 23 (16 to 23 (GRPNVGKS)) interacts with GTP. A G2 region spans residues 42–46 (QTTRH). Residues 63 to 66 (DTPG) form a G3 region. GTP is bound by residues 63–67 (DTPGM) and 125–128 (NKTD). Positions 125 to 128 (NKTD) are G4. Residues 155–157 (ISA) form a G5 region. The KH type-2 domain occupies 199–283 (VREKIMRQLG…MLNLWVKVKG (85 aa)).

This sequence belongs to the TRAFAC class TrmE-Era-EngA-EngB-Septin-like GTPase superfamily. Era GTPase family. Monomer.

Its subcellular location is the cytoplasm. The protein resides in the cell inner membrane. Functionally, an essential GTPase that binds both GDP and GTP, with rapid nucleotide exchange. Plays a role in 16S rRNA processing and 30S ribosomal subunit biogenesis and possibly also in cell cycle regulation and energy metabolism. This Pseudomonas syringae pv. tomato (strain ATCC BAA-871 / DC3000) protein is GTPase Era.